We begin with the raw amino-acid sequence, 71 residues long: Small ribosomal subunit protein eS17 (71 aa).

This sequence belongs to the eukaryotic ribosomal protein eS17 family.

The polypeptide is Small ribosomal subunit protein eS17 (Pyrobaculum neutrophilum (strain DSM 2338 / JCM 9278 / NBRC 100436 / V24Sta) (Thermoproteus neutrophilus)).